The following is a 414-amino-acid chain: 3-ketoacyl-CoA thiolase, peroxisomal (414 aa).

The N-terminal 9 residues, 1 to 9 (MDRLNNLAT), are a transit peptide targeting the peroxisome. The interval 1 to 9 (MDRLNNLAT) is PTS2-type peroxisomal targeting signal. Cys115 functions as the Acyl-thioester intermediate in the catalytic mechanism. Active-site proton acceptor residues include His370 and Cys400.

Belongs to the thiolase-like superfamily. Thiolase family. Homodimer. Interacts (via PTS2-type peroxisomal targeting signal region) with PEX7; leading to its translocation into peroxisomes.

It localises to the peroxisome. The enzyme catalyses an acyl-CoA + acetyl-CoA = a 3-oxoacyl-CoA + CoA. Its pathway is lipid metabolism; fatty acid metabolism. Its function is as follows. Responsible for the thiolytic cleavage of straight chain 3-keto fatty acyl-CoAs (3-oxoacyl-CoAs). The protein is 3-ketoacyl-CoA thiolase, peroxisomal (POT1) of Yarrowia lipolytica (strain CLIB 122 / E 150) (Yeast).